The sequence spans 361 residues: Zygote arrest protein 1 (361 aa).

3 disordered regions span residues 1–23, 98–128, and 148–252; these read MFPA…AGDG, QPAG…PRSW, and VAGG…EQDK. The residue at position 154 (T154) is a Phosphothreonine; by CDK1. A Phosphoserine; by CDK1 modification is found at S161. Over residues 168–177 the composition is skewed to basic and acidic residues; the sequence is REPEPREVAA. The 3CxxC-type zinc finger occupies 263–346; that stretch reads KYGYYHCKDC…RQDLCGRCKD (84 aa).

This sequence belongs to the ZAR1 family. In terms of assembly, interacts with YBX2. Post-translationally, phosphorylation by CDK1 does not regulate formation of MARDO (mitochondria-associated ribonucleoprotein domain) membraneless compartment. Ubiquitinated and degradaded by the proteasome during oocyte meiotic maturation, leading to MARDO (mitochondria-associated ribonucleoprotein domain) membraneless compartment dissolution. Ovary. Expressed in primary oocytes (from primary through antral follicle stages) and during the progression from Meiosis I to Meiosis II. The mRNA is detected in growing oocytes (early primary follicle, type 3a) through fully grown oocytes (antral follicle, type 8).

It is found in the cytoplasm. It localises to the cytoplasmic ribonucleoprotein granule. In terms of biological role, mRNA-binding protein that mediates formation of MARDO (mitochondria-associated ribonucleoprotein domain), a membraneless compartment that stores maternal mRNAs in oocytes. MARDO assembly around mitochondria is directed by an increase in mitochondrial membrane potential during oocyte growth. Promotes formation of MARDO phase-separated membraneless compartment by undergoing liquid-liquid phase separation upon binding to maternal mRNAs. Binds to the 3'-UTR of maternal mRNAs. Maternal mRNAs stored in the MARDO are translationally repressed. Essential for female fertility and oocyte-to-embryo transition by coordinating maternal mRNA storage, translation and degradation. The chain is Zygote arrest protein 1 from Mus musculus (Mouse).